The following is a 450-amino-acid chain: Phosphoglucosamine mutase (450 aa).

The active-site Phosphoserine intermediate is Ser102. 4 residues coordinate Mg(2+): Ser102, Asp243, Asp245, and Asp247. Residue Ser102 is modified to Phosphoserine.

This sequence belongs to the phosphohexose mutase family. Requires Mg(2+) as cofactor. In terms of processing, activated by phosphorylation.

It carries out the reaction alpha-D-glucosamine 1-phosphate = D-glucosamine 6-phosphate. Catalyzes the conversion of glucosamine-6-phosphate to glucosamine-1-phosphate. This Rhizobium etli (strain ATCC 51251 / DSM 11541 / JCM 21823 / NBRC 15573 / CFN 42) protein is Phosphoglucosamine mutase.